Here is a 201-residue protein sequence, read N- to C-terminus: Large ribosomal subunit protein uL4 (201 aa).

The disordered stretch occupies residues 44–71; it reads RAQKTRAEVTGSGKKPWRQKGTGRARSG.

This sequence belongs to the universal ribosomal protein uL4 family. In terms of assembly, part of the 50S ribosomal subunit.

One of the primary rRNA binding proteins, this protein initially binds near the 5'-end of the 23S rRNA. It is important during the early stages of 50S assembly. It makes multiple contacts with different domains of the 23S rRNA in the assembled 50S subunit and ribosome. In terms of biological role, forms part of the polypeptide exit tunnel. The polypeptide is Large ribosomal subunit protein uL4 (Edwardsiella ictaluri (strain 93-146)).